A 258-amino-acid chain; its full sequence is Transcriptional repressor AccR (258 aa).

One can recognise an HTH deoR-type domain in the interval 6 to 61; sequence TQDRQAKIVELLRDEQFLAIGRLTEHFQISVATARRDLSELHEAGLLRRTHGGAVS. The H-T-H motif DNA-binding region spans 23–42; sequence LAIGRLTEHFQISVATARRD.

Represses opine catabolism and conjugal transfer of the nopaline Ti plasmid pTiC58. In Agrobacterium fabrum (strain C58 / ATCC 33970) (Agrobacterium tumefaciens (strain C58)), this protein is Transcriptional repressor AccR (accR).